The primary structure comprises 381 residues: 1-deoxy-D-xylulose 5-phosphate reductoisomerase (381 aa).

NADPH-binding residues include T10, G11, S12, I13, G36, K37, N38, and N120. Position 121 (K121) interacts with 1-deoxy-D-xylulose 5-phosphate. E122 lines the NADPH pocket. Residue D146 participates in Mn(2+) binding. 1-deoxy-D-xylulose 5-phosphate-binding residues include S147, E148, S172, and H195. E148 lines the Mn(2+) pocket. Residue G201 participates in NADPH binding. 1-deoxy-D-xylulose 5-phosphate contacts are provided by S208, N213, K214, and E217. Residue E217 coordinates Mn(2+).

This sequence belongs to the DXR family. Mg(2+) serves as cofactor. Mn(2+) is required as a cofactor.

The catalysed reaction is 2-C-methyl-D-erythritol 4-phosphate + NADP(+) = 1-deoxy-D-xylulose 5-phosphate + NADPH + H(+). It functions in the pathway isoprenoid biosynthesis; isopentenyl diphosphate biosynthesis via DXP pathway; isopentenyl diphosphate from 1-deoxy-D-xylulose 5-phosphate: step 1/6. Functionally, catalyzes the NADPH-dependent rearrangement and reduction of 1-deoxy-D-xylulose-5-phosphate (DXP) to 2-C-methyl-D-erythritol 4-phosphate (MEP). This chain is 1-deoxy-D-xylulose 5-phosphate reductoisomerase, found in Lysinibacillus sphaericus (strain C3-41).